The chain runs to 387 residues: Phosphoglycerate kinase (387 aa).

Substrate contacts are provided by residues 21 to 23 (DLN), Arg-36, and 59 to 62 (HLGR). N6-acetyllysine is present on Lys-84. Substrate is bound by residues Arg-113 and Arg-146. ATP-binding positions include Lys-197, Glu-314, and 340-343 (GGDT).

Belongs to the phosphoglycerate kinase family. As to quaternary structure, monomer.

The protein localises to the cytoplasm. It carries out the reaction (2R)-3-phosphoglycerate + ATP = (2R)-3-phospho-glyceroyl phosphate + ADP. It participates in carbohydrate degradation; glycolysis; pyruvate from D-glyceraldehyde 3-phosphate: step 2/5. The sequence is that of Phosphoglycerate kinase from Escherichia coli O139:H28 (strain E24377A / ETEC).